A 352-amino-acid polypeptide reads, in one-letter code: Speedy protein E18 (352 aa).

Positions Met-1–Gly-12 are enriched in basic residues. Residues Met-1–Pro-90 are disordered. Polar residues predominate over residues Gly-16–Tyr-39. A compositionally biased stretch (acidic residues) spans Asp-76–Pro-90.

It belongs to the Speedy/Ringo family.

The chain is Speedy protein E18 from Homo sapiens (Human).